A 219-amino-acid polypeptide reads, in one-letter code: Carbonic anhydrase 1 (219 aa).

Positions 39, 41, 98, and 101 each coordinate Zn(2+).

Belongs to the beta-class carbonic anhydrase family. Oligomer. It depends on Zn(2+) as a cofactor.

It carries out the reaction hydrogencarbonate + H(+) = CO2 + H2O. Reversible hydration of carbon dioxide. Carbon dioxide formed in the bicarbonate-dependent decomposition of cyanate by cyanase (CynS) diffuses out of the cell faster than it would be hydrated to bicarbonate, so the apparent function of this enzyme is to catalyze the hydration of carbon dioxide and thus prevent depletion of cellular bicarbonate. In Escherichia coli O157:H7, this protein is Carbonic anhydrase 1 (cynT).